A 228-amino-acid polypeptide reads, in one-letter code: L-ribulose-5-phosphate 4-epimerase UlaF (228 aa).

Substrate contacts are provided by residues 26–27 (GN), 43–44 (SG), and 72–73 (SS). Aspartate 74, histidine 93, and histidine 95 together coordinate Zn(2+). Catalysis depends on aspartate 118, which acts as the Proton donor/acceptor. Histidine 167 is a Zn(2+) binding site. Tyrosine 225 functions as the Proton donor/acceptor in the catalytic mechanism.

The protein belongs to the aldolase class II family. AraD/FucA subfamily. Zn(2+) serves as cofactor.

The enzyme catalyses L-ribulose 5-phosphate = D-xylulose 5-phosphate. Its pathway is cofactor degradation; L-ascorbate degradation; D-xylulose 5-phosphate from L-ascorbate: step 4/4. Catalyzes the isomerization of L-ribulose 5-phosphate to D-xylulose 5-phosphate. Is involved in the anaerobic L-ascorbate utilization. This is L-ribulose-5-phosphate 4-epimerase UlaF from Salmonella paratyphi A (strain ATCC 9150 / SARB42).